The following is a 1047-amino-acid chain: Jouberin (1047 aa).

Composition is skewed to basic and acidic residues over residues 1–17 (MEQETPEKVDSAQEKVR) and 77–86 (LLHDDKLGSE). Disordered regions lie at residues 1–44 (MEQE…LTEA) and 67–185 (EQLT…SPVH). Positions 1 to 285 (MEQETPEKVD…IFNENFPYLL (285 aa)) are interaction with HAP1. Basic residues predominate over residues 87–96 (KRKKKKKKKV). Over residues 116-132 (GEQKKEGAPEGSHHREG) the composition is skewed to basic and acidic residues. The span at 150-160 (PKPKKMKKKPK) shows a compositional bias: basic residues. The span at 173–185 (GVHEITGRDSPVH) shows a compositional bias: basic and acidic residues. WD repeat units lie at residues 458 to 500 (AGER…FMRE), 503 to 542 (GHLNIIYDLDWSKDDRYLVTSSSDGTARVWKNEINSTSTF), 546 to 586 (PHPS…DAAI), 593 to 632 (VHKSFVNSICFDDEGHHMYSGDCIGVIAVWDTYVKVTDVQ), 649 to 688 (FRGVPVSYLEVHPNGKRLLIHTKDSTLRIMDLRILAARKF), 692 to 731 (ANYREKIHSTLTPCGTLLFSGSEDGIVYVWNPETGEQVAM), and 736 to 777 (PFKS…AQQE). At serine 854 the chain carries Phosphoserine. Positions 903–963 (DPPPMVVALY…PANHVASETL (61 aa)) constitute an SH3 domain. Basic and acidic residues-rich tracts occupy residues 964-1003 (YRDSPPKVKERSPPLTPKEKAKMEKPPASRKSLIKDRFLD) and 1012-1040 (GHSEKGRDQNFEERGHKSDMEMKKSEPTV). The tract at residues 964–1047 (YRDSPPKVKE…PTVRKVTLIE (84 aa)) is disordered. At serine 975 the chain carries Phosphoserine.

Self-associates. Part of the tectonic-like complex (also named B9 complex). Interacts with MKS1. Interacts with NPHP1; probably as heterodimers and/or AHI1(2):NPHP1(2) heterotetramers. Interacts (via SH3 domain) with the dynamin GTPase DNM2. Interacts with HAP1; probably as AHI1(2):HAP1(2) heterotetramers. Interacts with RAB8A. Interacts with CEND1. Interacts with SPATA7.

The protein localises to the cytoplasm. The protein resides in the cytoskeleton. It localises to the cilium basal body. It is found in the microtubule organizing center. Its subcellular location is the centrosome. The protein localises to the centriole. The protein resides in the cell junction. It localises to the adherens junction. In terms of biological role, involved in vesicle trafficking and required for ciliogenesis, formation of primary non-motile cilium, and recruitment of RAB8A to the basal body of primary cilium. Component of the tectonic-like complex, a complex localized at the transition zone of primary cilia and acting as a barrier that prevents diffusion of transmembrane proteins between the cilia and plasma membranes. Involved in neuronal differentiation. As a positive modulator of classical Wnt signaling, may play a crucial role in ciliary signaling during cerebellum embryonic development. This is Jouberin (Ahi1) from Rattus norvegicus (Rat).